We begin with the raw amino-acid sequence, 362 residues long: 2-aminoethylphosphonate--pyruvate transaminase (362 aa).

Lys193 carries the post-translational modification N6-(pyridoxal phosphate)lysine.

The protein belongs to the class-V pyridoxal-phosphate-dependent aminotransferase family. PhnW subfamily. As to quaternary structure, homodimer. Requires pyridoxal 5'-phosphate as cofactor.

The catalysed reaction is (2-aminoethyl)phosphonate + pyruvate = phosphonoacetaldehyde + L-alanine. Functionally, involved in phosphonate degradation. The chain is 2-aminoethylphosphonate--pyruvate transaminase from Phocaeicola vulgatus (strain ATCC 8482 / DSM 1447 / JCM 5826 / CCUG 4940 / NBRC 14291 / NCTC 11154) (Bacteroides vulgatus).